The following is a 496-amino-acid chain: Maturase K (496 aa).

Belongs to the intron maturase 2 family. MatK subfamily.

Its subcellular location is the plastid. It localises to the chloroplast. Its function is as follows. Usually encoded in the trnK tRNA gene intron. Probably assists in splicing its own and other chloroplast group II introns. In Paeonia suffruticosa (Tree peony), this protein is Maturase K.